The primary structure comprises 424 residues: Probable ribonuclease FAU-1 (424 aa).

Belongs to the FAU-1 family.

In terms of biological role, probable RNase involved in rRNA stability through maturation and/or degradation of precursor rRNAs. Binds to RNA in loop regions with AU-rich sequences. The chain is Probable ribonuclease FAU-1 from Saccharolobus islandicus (strain M.16.27) (Sulfolobus islandicus).